A 289-amino-acid chain; its full sequence is Shikimate dehydrogenase (NADP(+)) (289 aa).

Shikimate is bound by residues 22–24 and Thr-69; that span reads SRS. The Proton acceptor role is filled by Lys-73. Glu-85 serves as a coordination point for NADP(+). Residues Asn-94 and Asp-109 each contribute to the shikimate site. NADP(+)-binding positions include 134-138, 158-163, and Ile-226; these read GAGGA and NRTLSR. Position 228 (Tyr-228) interacts with shikimate. An NADP(+)-binding site is contributed by Gly-249.

It belongs to the shikimate dehydrogenase family. As to quaternary structure, homodimer.

It carries out the reaction shikimate + NADP(+) = 3-dehydroshikimate + NADPH + H(+). It participates in metabolic intermediate biosynthesis; chorismate biosynthesis; chorismate from D-erythrose 4-phosphate and phosphoenolpyruvate: step 4/7. In terms of biological role, involved in the biosynthesis of the chorismate, which leads to the biosynthesis of aromatic amino acids. Catalyzes the reversible NADPH linked reduction of 3-dehydroshikimate (DHSA) to yield shikimate (SA). The protein is Shikimate dehydrogenase (NADP(+)) of Brucella canis (strain ATCC 23365 / NCTC 10854 / RM-666).